A 983-amino-acid polypeptide reads, in one-letter code: MQVDPVVYQLQRAVSQDPIAVKDAEGHLNNWKKEPGFFGKLYSIFLDKQNDMSLRWIAIIQLRNSIDIIWRKNTKMSLLPEERDFIRCNALLGSIKSENLLSIQNALVVSRIARLDYPTEWPSLFHDLLGKLQQSLGTGDYDVALRLLITLHHIIKAMAGNRLLRSRQIFYKLAPELLTILQPILHSSLSSWMMILESSKEIKDSTLLSYMQISRYTLKACRRLVVFGFQNPSESEFSERMLAFCAVHQRKLLSMLGTMLQSSRSPIVVGECLEMAFAHAFLFNKPFFDFSFYSPCLTKFPATIDYISLHYDFLGQISSHLSSYKEKFEESSKNFEKLVIMSLRVFILVIQEFCNTKSSHPETAQVLYNSFLVDNRINNLLDLLITKLLILKEEDFEEWTDSPQQWVLEQSTQDVEFNVRPCAEKLLKCFFDAYGDIIVSPFKDMIYSVFECPKTLTQAVQQDTLISSFGVGYTQLKSIFPFAKWLQEAAVPNMASINDIGISRVYRRRIAIFLSQWIEDSSSEQLLEVIYKLYCSFLNLTDPCNDAVVILTTIDAFKTVLDDWNFSENSFLSIKENLFVHVLSLFKAFESVDARTSILSLLGTLLARAGEHVAPMESTIASLLSQLWDGWKKEPLLRARVLAVMHQFVNAIKAKSFEFSTFLYTVIEYCVNPESPEHVIFEADAMELWSTFLMYIQKLPETFTLLIPHLLYHLSQATSTLPFVLMIVSSYQLLDNTVLMKDYSFTIFEKLNDLLDDVKNETLQALCKTVCLLIETTPMDMIYESLLNSSLLSRLLLSIATNDKHPQVLIEYLLVVSRISLREPELILKVCQTKNINIAMLIGNWILLNDHINHSKDRKLNTLALSSLLRTNHPDVLAVLDSIMNLWFSVLSEVEEDANGDATIYYKNDDYSAVGFYLDETSEEMTRRKQLLLKDPVHSVNSRSFFISVFMFCRDANGGMENFQNQYLSTVNPALLEQFQSML.

An Importin N-terminal domain is found at Ala24–Lys96.

The protein belongs to the importin beta family.

The protein localises to the nucleus. Functionally, functions as a component of the nuclear pore complex (NPC). NPC components, collectively referred to as nucleoporins (NUPs), can play the role of both NPC structural components and of docking or interaction partners for transiently associated nuclear transport factors. Active directional transport is assured by both, a Phe-Gly (FG) repeat affinity gradient for these transport factors across the NPC and a transport cofactor concentration gradient across the nuclear envelope. Involved in the export of mRNA from the nucleus to the cytoplasm. May play a role in mitotic spindle formation and/or function. The sequence is that of Importin beta-like protein kap113 (kap113) from Schizosaccharomyces pombe (strain 972 / ATCC 24843) (Fission yeast).